Consider the following 325-residue polypeptide: Small ribosomal subunit protein uS2 (325 aa).

The span at 212–226 (KEEQAKAEAERERLA) shows a compositional bias: basic and acidic residues. The interval 212 to 325 (KEEQAKAEAE…TEPKASTGNW (114 aa)) is disordered. 2 stretches are compositionally biased toward low complexity: residues 234–247 (QPAAPQQDPDQWAD) and 261–289 (PVTTAPVPTGGAPPVASTTATPATNTGSG). The span at 290 to 300 (FNQDDWSVPTT) shows a compositional bias: polar residues.

Belongs to the universal ribosomal protein uS2 family. In terms of assembly, component of the small ribosomal subunit. Mature ribosomes consist of a small (40S) and a large (60S) subunit. The 40S subunit contains about 33 different proteins and 1 molecule of RNA (18S). The 60S subunit contains about 49 different proteins and 3 molecules of RNA (28S, 5.8S and 5S). Interacts with ribosomal protein S21.

Its subcellular location is the cytoplasm. Required for the assembly and/or stability of the 40S ribosomal subunit. Required for the processing of the 20S rRNA-precursor to mature 18S rRNA in a late step of the maturation of 40S ribosomal subunits. This is Small ribosomal subunit protein uS2 from Suberites domuncula (Sponge).